The sequence spans 246 residues: 3-deoxy-manno-octulosonate cytidylyltransferase (246 aa).

This sequence belongs to the KdsB family.

It localises to the cytoplasm. The enzyme catalyses 3-deoxy-alpha-D-manno-oct-2-ulosonate + CTP = CMP-3-deoxy-beta-D-manno-octulosonate + diphosphate. It functions in the pathway nucleotide-sugar biosynthesis; CMP-3-deoxy-D-manno-octulosonate biosynthesis; CMP-3-deoxy-D-manno-octulosonate from 3-deoxy-D-manno-octulosonate and CTP: step 1/1. The protein operates within bacterial outer membrane biogenesis; lipopolysaccharide biosynthesis. Activates KDO (a required 8-carbon sugar) for incorporation into bacterial lipopolysaccharide in Gram-negative bacteria. This chain is 3-deoxy-manno-octulosonate cytidylyltransferase, found in Bradyrhizobium sp. (strain ORS 278).